Consider the following 241-residue polypeptide: RAD9, HUS1, RAD1-interacting nuclear orphan protein 1 (241 aa).

Positions 1–10 are enriched in basic residues; the sequence is MPPRKKRRQA. The tract at residues 1–27 is disordered; sequence MPPRKKRRQAAQKPQLLFHQQPLEAPK. An RAD1-binding motif motif is present at residues 56–62; the sequence is SWVSPQF. Disordered stretches follow at residues 68–134 and 157–204; these read SWFP…PLVP and IPPD…LVTD. Residues 72–87 are compositionally biased toward basic residues; sequence GKRKHHHRDHARRSSR. The span at 100–110 shows a compositional bias: polar residues; sequence ETPQSSASSAT. The short motif at 129-136 is the D-box element; sequence GRPLVPML. The KEN box motif lies at 177–181; it reads LRENS. Residues 181-193 show a composition bias toward polar residues; the sequence is SLPSCSLHTSTPK.

Interacts (when phosphorylated by PLK1) with POLQ; promoting POLQ recruitment to DNA damage sites. Interacts with RAD1; interaction is direct and promotes association with the 9-1-1 (RAD9-RAD1-HUS1) complex. Interacts with RAD18. Interacts with TOPBP1. Interacts with UBE2N. Phosphorylated by PLK1, promoting interaction with polymerase theta (POLQ). Post-translationally, ubiquitinated and degraded by the APC/C complex upon mitotic exit.

The protein resides in the nucleus. It localises to the chromosome. In terms of biological role, involved in microhomology-mediated end-joining (MMEJ) DNA repair by promoting recruitment of polymerase theta (POLQ) to DNA damage sites during mitosis. MMEJ is an alternative non-homologous end-joining (NHEJ) machinery that takes place during mitosis to repair double-strand breaks in DNA that originate in S-phase. Accumulates in M-phase; following phosphorylation by PLK1, interacts with POLQ, enabling its recruitment to double-strand breaks for subsequent repair. Also involved in the DNA damage response (DDR) signaling in response to genotoxic stresses such as ionizing radiation (IR) during the S phase. Recruited to sites of DNA damage through interaction with the 9-1-1 cell-cycle checkpoint response complex and TOPBP1 in a ATR-dependent manner. Required for the progression of the G1 to S phase transition. Plays a role in the stimulation of CHEK1 phosphorylation. This is RAD9, HUS1, RAD1-interacting nuclear orphan protein 1 (RHNO1) from Bos taurus (Bovine).